A 240-amino-acid chain; its full sequence is 31 kDa outer-membrane immunogenic protein (240 aa).

Residues 1–19 form the signal peptide; the sequence is MKSVILASIAAMFATSAMA. The interval 48–83 is epitope recognized by the monoclonal antibody A59/10F09/G10; the sequence is NAGYAGGKFKHPFSSFDKEDNEQVSGSLDVTAGGFV.

It belongs to the Omp25/RopB family. Oligomeric.

The protein resides in the cell outer membrane. Its function is as follows. Major outer membrane protein associated with peptidoglycans. May function as a porin. The chain is 31 kDa outer-membrane immunogenic protein (omp31) from Brucella melitensis biotype 1 (strain ATCC 23456 / CCUG 17765 / NCTC 10094 / 16M).